The following is a 372-amino-acid chain: MHIESPIKRRQSTRIYVGNVPIGDGAPIAVQSMTNTLTTDVAATVAQINALQKVGADIVRVSVPTMDAAEAFKLIKQQVSVPLVADIHFDYRIALKVAEYGVDCLRINPGNIGNEQRIRSVVDCARDNNIPIRIGVNGGSLEKDIQAKYKEPTAEALLESAMRHVDILDRMNFDQFKVSVKASDVFLAVDSYRLLAKQIVQPLHLGITEAGGARAGSVKSAVGLGLLLSEGIGDTLRISLAADPIEEIKVGFDILKSLRIRSRGINFIACPTCSRQEFDVIATVNELEQRLEDLITPMDVSLIGCVVNGPGEAEVSHMGIAGSYRKSAFYEDGIRQKERFDNDNIVDKLEARIRAKAAMLSKENQIDINQID.

[4Fe-4S] cluster contacts are provided by Cys270, Cys273, Cys305, and Glu312.

This sequence belongs to the IspG family. The cofactor is [4Fe-4S] cluster.

The catalysed reaction is (2E)-4-hydroxy-3-methylbut-2-enyl diphosphate + oxidized [flavodoxin] + H2O + 2 H(+) = 2-C-methyl-D-erythritol 2,4-cyclic diphosphate + reduced [flavodoxin]. It participates in isoprenoid biosynthesis; isopentenyl diphosphate biosynthesis via DXP pathway; isopentenyl diphosphate from 1-deoxy-D-xylulose 5-phosphate: step 5/6. In terms of biological role, converts 2C-methyl-D-erythritol 2,4-cyclodiphosphate (ME-2,4cPP) into 1-hydroxy-2-methyl-2-(E)-butenyl 4-diphosphate. This chain is 4-hydroxy-3-methylbut-2-en-1-yl diphosphate synthase (flavodoxin), found in Aliivibrio salmonicida (strain LFI1238) (Vibrio salmonicida (strain LFI1238)).